The following is a 572-amino-acid chain: MVRKYGIFIDAGSSGSRLLIYSWDYDTDSSLSDKVKKLPLIETGIGDGGKWSLKVQPGISSFANNPKHVGKKHLKELLDFAAHAIPKDVHKETPVFLSATAGMRLLGVDAQNKILSHACRYIKKNYDFDIPNCSNSIRVIDGKAEGMYGWLATNYLLKTLEEKDTSTVGFLDMGGASVQIAFELPPSQLKNYKDSISTVHIGLQNGQQLEYPLFVTTWLGFGANEAYRRYLGLLIESENGKVGNTLSDPCSLRGRTYDIDGIEFAGTGDLKQCLKLTYNLLNKDKPCSMDPCNFDGISIPPVDFANTEFVGVSEFWYTTNDVFDMGGSYHFPNFYKKVDEYCGTEWETMLSRLYNKELTPSTDENKLEKLCFKASWALNVLHEGFDVPKSNTSSNDAKDGLSVIPAYHSPFTSLEKIERTEVSWTLGQVLLYASNQQLLAKPEYANYYMDPYGKLIASPSKHWMRLFPNKLFFILSFIFCLFFLFSLVLFGYDPKRRQRFKKFLLRLQRRKAPYIMSANGSYEDIADFSDDLEMSSPSKWHGPPIRTTSSHVLADRLSFTASRERTPRSPFP.

The Lumenal segment spans residues 1–470; that stretch reads MVRKYGIFID…KHWMRLFPNK (470 aa). The active-site Proton acceptor is glutamate 145. A helical transmembrane segment spans residues 471 to 491; the sequence is LFFILSFIFCLFFLFSLVLFG. Topologically, residues 492–572 are cytoplasmic; the sequence is YDPKRRQRFK…RERTPRSPFP (81 aa).

This sequence belongs to the GDA1/CD39 NTPase family. Ca(2+) is required as a cofactor. Mg(2+) serves as cofactor. Requires Mn(2+) as cofactor.

Its subcellular location is the golgi apparatus. It is found in the membrane. It carries out the reaction a ribonucleoside 5'-triphosphate + 2 H2O = a ribonucleoside 5'-phosphate + 2 phosphate + 2 H(+). The protein operates within protein modification; protein glycosylation. Its function is as follows. Catalyzes the hydrolysis of phosphoanhydride bonds of nucleoside tri- and di-phosphates. Required for Golgi glycosylation and cell wall integrity. Involved in N-mannosylation of proteins in Golgi. This is Golgi apyrase from Schizosaccharomyces pombe (strain 972 / ATCC 24843) (Fission yeast).